Here is a 510-residue protein sequence, read N- to C-terminus: Protein fork head (510 aa).

Disordered regions lie at residues 1–62 and 175–205; these read MQKL…SPLA and AMPP…YRRS. Residues 20–39 show a composition bias toward gly residues; it reads SGGGGPPSGGGGGGGGGGGG. The segment covering 47–60 has biased composition (low complexity); that stretch reads NNPNPTSNGGSMSP. Residues serine 187 and serine 190 each carry the phosphoserine modification. A DNA-binding region (fork-head) is located at residues 209 to 300; it reads AKPPYSYISL…GNMFENGCYL (92 aa). Residues 309 to 359 form a disordered region; it reads EKKEAIRQLHKSPSHSSLEATSPGKKDHEDSHHMHHHHHSRLDHHQHHKEA. A phosphoserine mark is found at serine 320, serine 322, and serine 330. Residues 341–356 show a composition bias toward basic residues; that stretch reads HMHHHHHSRLDHHQHH.

The protein resides in the nucleus. Fkh promotes terminal as opposed to segmental development. In the absence of fkh, this developmental switch does not occur. The nuclear localization of the fkh protein suggest that fkh regulates the transcription of other, subordinate, genes. In Drosophila melanogaster (Fruit fly), this protein is Protein fork head (fkh).